Here is a 183-residue protein sequence, read N- to C-terminus: Lipid droplet coating protein mpl1 (183 aa).

The protein belongs to the perilipin family.

The protein localises to the lipid droplet. Its function is as follows. Lipid droplet coating protein that regulates lipid metabolism, appressorial turgor pressure, and virulence. Appressorial turgor pressure is important for breaching the insect cuticle during infection. The polypeptide is Lipid droplet coating protein mpl1 (Metarhizium robertsii (strain ARSEF 23 / ATCC MYA-3075) (Metarhizium anisopliae (strain ARSEF 23))).